The chain runs to 130 residues: Methylglyoxal synthase (130 aa).

The MGS-like domain occupies 1–130 (MSKPRIALIA…DLARNMQDVC (130 aa)). Residues His-11, Lys-15, 37-40 (TGTT), and 57-58 (SG) contribute to the substrate site. The active-site Proton donor/acceptor is Asp-63. Residue His-90 participates in substrate binding.

Belongs to the methylglyoxal synthase family.

The catalysed reaction is dihydroxyacetone phosphate = methylglyoxal + phosphate. Functionally, catalyzes the formation of methylglyoxal from dihydroxyacetone phosphate. This is Methylglyoxal synthase from Burkholderia cenocepacia (strain HI2424).